A 201-amino-acid polypeptide reads, in one-letter code: Superoxide dismutase [Mn] (201 aa).

Residues H27, H81, D163, and H167 each contribute to the Mn(2+) site.

This sequence belongs to the iron/manganese superoxide dismutase family. Homodimer. Requires Mn(2+) as cofactor.

The catalysed reaction is 2 superoxide + 2 H(+) = H2O2 + O2. Destroys superoxide anion radicals which are normally produced within the cells and which are toxic to biological systems. May play a critical role against oxidative stress, affecting both the survival and the virulence of S.pneumoniae. The chain is Superoxide dismutase [Mn] (sodA) from Streptococcus pneumoniae serotype 4 (strain ATCC BAA-334 / TIGR4).